A 127-amino-acid chain; its full sequence is Small ribosomal subunit protein uS11 (127 aa).

The protein belongs to the universal ribosomal protein uS11 family. Part of the 30S ribosomal subunit. Interacts with proteins S7 and S18. Binds to IF-3.

Its function is as follows. Located on the platform of the 30S subunit, it bridges several disparate RNA helices of the 16S rRNA. Forms part of the Shine-Dalgarno cleft in the 70S ribosome. The polypeptide is Small ribosomal subunit protein uS11 (Lactococcus lactis subsp. lactis (strain IL1403) (Streptococcus lactis)).